The following is a 465-amino-acid chain: Innexin-11 (465 aa).

4 helical membrane passes run 29 to 49 (LMTP…QFGG), 105 to 125 (QWVP…SYLW), 195 to 215 (SGFI…NVFA), and 286 to 306 (IFVL…VSLV). Residues 433–465 (ISTSLMPDKDDIESSSTSSEEDQKRVSNVITNI) form a disordered region.

This sequence belongs to the pannexin family.

The protein localises to the cell membrane. The protein resides in the cell junction. It localises to the gap junction. Structural component of the gap junctions. This chain is Innexin-11 (inx-11), found in Caenorhabditis elegans.